Reading from the N-terminus, the 200-residue chain is NADH-quinone oxidoreductase subunit C (200 aa).

This sequence belongs to the complex I 30 kDa subunit family. In terms of assembly, NDH-1 is composed of 14 different subunits. Subunits NuoB, C, D, E, F, and G constitute the peripheral sector of the complex.

It is found in the cell inner membrane. It carries out the reaction a quinone + NADH + 5 H(+)(in) = a quinol + NAD(+) + 4 H(+)(out). Its function is as follows. NDH-1 shuttles electrons from NADH, via FMN and iron-sulfur (Fe-S) centers, to quinones in the respiratory chain. The immediate electron acceptor for the enzyme in this species is believed to be ubiquinone. Couples the redox reaction to proton translocation (for every two electrons transferred, four hydrogen ions are translocated across the cytoplasmic membrane), and thus conserves the redox energy in a proton gradient. The protein is NADH-quinone oxidoreductase subunit C of Parvibaculum lavamentivorans (strain DS-1 / DSM 13023 / NCIMB 13966).